Consider the following 430-residue polypeptide: Glutamate-1-semialdehyde 2,1-aminomutase (430 aa).

Lys-268 bears the N6-(pyridoxal phosphate)lysine mark.

This sequence belongs to the class-III pyridoxal-phosphate-dependent aminotransferase family. HemL subfamily. Homodimer. Requires pyridoxal 5'-phosphate as cofactor.

It localises to the cytoplasm. It catalyses the reaction (S)-4-amino-5-oxopentanoate = 5-aminolevulinate. Its pathway is porphyrin-containing compound metabolism; protoporphyrin-IX biosynthesis; 5-aminolevulinate from L-glutamyl-tRNA(Glu): step 2/2. The chain is Glutamate-1-semialdehyde 2,1-aminomutase (hemL) from Bacillus subtilis (strain 168).